The primary structure comprises 601 residues: NADH-quinone oxidoreductase subunit C/D (601 aa).

The NADH dehydrogenase I subunit C stretch occupies residues 1–191 (MKLTRDFPHN…DPFMLDAAKQ (191 aa)). The segment at 215-601 (DYMFLNLGPN…IDFVMSDVDR (387 aa)) is NADH dehydrogenase I subunit D.

The protein in the N-terminal section; belongs to the complex I 30 kDa subunit family. In the C-terminal section; belongs to the complex I 49 kDa subunit family. In terms of assembly, NDH-1 is composed of 13 different subunits. Subunits NuoB, CD, E, F, and G constitute the peripheral sector of the complex.

It is found in the cell inner membrane. The catalysed reaction is a quinone + NADH + 5 H(+)(in) = a quinol + NAD(+) + 4 H(+)(out). Functionally, NDH-1 shuttles electrons from NADH, via FMN and iron-sulfur (Fe-S) centers, to quinones in the respiratory chain. The immediate electron acceptor for the enzyme in this species is believed to be ubiquinone. Couples the redox reaction to proton translocation (for every two electrons transferred, four hydrogen ions are translocated across the cytoplasmic membrane), and thus conserves the redox energy in a proton gradient. The protein is NADH-quinone oxidoreductase subunit C/D of Shewanella oneidensis (strain ATCC 700550 / JCM 31522 / CIP 106686 / LMG 19005 / NCIMB 14063 / MR-1).